The primary structure comprises 62 residues: Large ribosomal subunit protein bL28 (62 aa).

The disordered stretch occupies residues 1-27 (MARECYITGRKARSGNKRSHAMNKSKR). Residues 10–27 (RKARSGNKRSHAMNKSKR) show a composition bias toward basic residues.

This sequence belongs to the bacterial ribosomal protein bL28 family.

This chain is Large ribosomal subunit protein bL28, found in Shouchella clausii (strain KSM-K16) (Alkalihalobacillus clausii).